A 1401-amino-acid chain; its full sequence is Alpha-latrotoxin-Lt1a (1401 aa).

The first 20 residues, 1-20 (MISVGEIMERANHSLVRMRR), serve as a signal peptide directing secretion. The tract at residues 17 to 20 (RMRR) is furin-like endopeptidase recognition region. The helix H8 is the probable transmembrane region of the tetrameric pore inserted in the target cell membrane stretch occupies residues 238–257 (VLYALLYGTQTYVSVMFFLL). Cys-413 and Cys-1066 are joined by a disulfide. 22 ANK repeats span residues 458–489 (LYNA…ATFD), 490–521 (HGRT…ELNQ), 525–554 (KGYT…SINS), 559–589 (FLQT…NINE), 593–622 (DGFT…DVNA), 626–656 (TGLT…DINA), 660–690 (NNIT…NANV), 695–723 (GLLS…NVNV), 729–758 (GGIT…NIEQ), 762–791 (EKYT…NFEA), 795–824 (SGAT…NWRD), 828–857 (NGQM…TVVD), 862–891 (NSDT…DINT), 895–924 (KGLA…NVYI), 928–957 (DGMN…KFEW), 971–1003 (EECA…GNFA), 1004–1033 (ICGP…SVDG), 1035–1064 (KTDT…KVNH), 1068–1097 (NGMT…DFRR), 1101–1131 (RGTT…DINI), 1137–1166 (DKDT…DVTI), and 1170–1199 (YDKT…KFRR). Residues 1026-1032 (EEFLSVD) form a 4C4.1 epitope region. The furin-like endopeptidase recognition region stretch occupies residues 1196–1199 (KFRR). A propeptide spanning residues 1200 to 1401 (EYKSSYGERS…SDGILTKKLM (202 aa)) is cleaved from the precursor.

This sequence belongs to the cationic peptide 01 (latrotoxin) family. 03 (alpha-latrotoxin) subfamily. As to quaternary structure, homotetramer in membranes. Processed by furin-like proteases at both the N- and C-termini. In terms of tissue distribution, expressed in venom gland, cephalothorax, and abdomen tissues from both males and females.

It localises to the secreted. The protein localises to the target cell membrane. Presynaptic neurotoxin that causes massive release of neurotransmitters from vertebrate (but not invertebrate) nerve terminals and endocrine cells via a complex mechanism involving activation of receptor(s) and toxin insertion into the plasma membrane with subsequent pore formation. Binds to neurexin-1-alpha (NRXN1) in a calcium dependent manner, adhesion G protein-coupled receptor L1 (ADGRL1, also termed latrophilin-1 and calcium-independent receptor of latrotoxin (CIRL)), and receptor-type tyrosine-protein phosphatase S (PTPRS), also termed PTP sigma. NRXN1 and PTPRS are suggested to provide a platform for binding and subsequent pore formation events. In contrast, binding to ADGRL1 does not involve oligomerization and channel formation, but direct downstream stimulation of the synaptic fusion machinery. The protein is Alpha-latrotoxin-Lt1a of Latrodectus tredecimguttatus (Mediterranean black widow spider).